The primary structure comprises 163 residues: Cyclic pyranopterin monophosphate synthase (163 aa).

Substrate-binding positions include 75–77 (LCH) and 115–116 (ME). The active site involves Asp-130.

It belongs to the MoaC family. Homohexamer; trimer of dimers.

The catalysed reaction is (8S)-3',8-cyclo-7,8-dihydroguanosine 5'-triphosphate = cyclic pyranopterin phosphate + diphosphate. It participates in cofactor biosynthesis; molybdopterin biosynthesis. In terms of biological role, catalyzes the conversion of (8S)-3',8-cyclo-7,8-dihydroguanosine 5'-triphosphate to cyclic pyranopterin monophosphate (cPMP). The protein is Cyclic pyranopterin monophosphate synthase of Variovorax paradoxus (strain S110).